A 289-amino-acid chain; its full sequence is Testis-expressed protein 26 (289 aa).

The disordered stretch occupies residues 1 to 26 (MEQPGPRAPDPSLCHHNLQPTDDPNW). Mn stretches follow at residues 30 to 42 (ATTM…PKTG), 69 to 83 (QTQY…SHSK), 144 to 157 (ISLT…RSKA), 179 to 193 (DTEF…AKIP), and 233 to 247 (QTTY…YPDF).

The protein is Testis-expressed protein 26 (TEX26) of Homo sapiens (Human).